The following is a 130-amino-acid chain: Large ribosomal subunit protein bL20 (130 aa).

Belongs to the bacterial ribosomal protein bL20 family.

Its function is as follows. Binds directly to 23S ribosomal RNA and is necessary for the in vitro assembly process of the 50S ribosomal subunit. It is not involved in the protein synthesizing functions of that subunit. The sequence is that of Large ribosomal subunit protein bL20 from Salinispora arenicola (strain CNS-205).